Here is a 163-residue protein sequence, read N- to C-terminus: ATP synthase subunit b 1 (163 aa).

A helical transmembrane segment spans residues 7-27 (AETWVAIAFVILMGIFAYLGV).

The protein belongs to the ATPase B chain family. In terms of assembly, F-type ATPases have 2 components, F(1) - the catalytic core - and F(0) - the membrane proton channel. F(1) has five subunits: alpha(3), beta(3), gamma(1), delta(1), epsilon(1). F(0) has three main subunits: a(1), b(2) and c(10-14). The alpha and beta chains form an alternating ring which encloses part of the gamma chain. F(1) is attached to F(0) by a central stalk formed by the gamma and epsilon chains, while a peripheral stalk is formed by the delta and b chains.

Its subcellular location is the cell inner membrane. Functionally, f(1)F(0) ATP synthase produces ATP from ADP in the presence of a proton or sodium gradient. F-type ATPases consist of two structural domains, F(1) containing the extramembraneous catalytic core and F(0) containing the membrane proton channel, linked together by a central stalk and a peripheral stalk. During catalysis, ATP synthesis in the catalytic domain of F(1) is coupled via a rotary mechanism of the central stalk subunits to proton translocation. In terms of biological role, component of the F(0) channel, it forms part of the peripheral stalk, linking F(1) to F(0). This is ATP synthase subunit b 1 from Rhodopseudomonas palustris (strain HaA2).